Reading from the N-terminus, the 615-residue chain is Delta(14)-sterol reductase LBR (615 aa).

The Tudor domain occupies 1–62; sequence MPSRKFADGE…DIKPLTSFRQ (62 aa). Residues 1-211 lie on the Nuclear side of the membrane; that stretch reads MPSRKFADGE…IRAKDLEFGG (211 aa). The tract at residues 52–109 is disordered; it reads NDIKPLTSFRQRKGGSTSSSPSRRRGSRSRSRSRSPGRPPKSARRSASASHQADIKEA. Lys-55 carries the post-translational modification N6-acetyllysine. Thr-58 is subject to Phosphothreonine. Phosphoserine is present on residues Ser-59 and Ser-67. Ser-71 and Ser-86 each carry phosphoserine; by CDK1. Over residues 73-86 the composition is skewed to basic residues; that stretch reads SRRRGSRSRSRSRS. Residues Ser-97 and Ser-99 each carry the phosphoserine modification. A Phosphothreonine modification is found at Thr-118. Ser-128 carries the post-translational modification Phosphoserine. Thr-200 carries the post-translational modification Phosphothreonine. Helical transmembrane passes span 212-232, 258-278, 299-319, 326-346, 386-406, 447-467, 481-501, and 561-581; these read VPGV…LLLM, VFGV…LPIG, FYAF…GVEF, FLQF…YLYM, FCEL…MLLA, IIHD…VPFI, EVSW…YVIF, and PCGF…MLLV. 2 positions are modified to N6-acetyllysine: Lys-594 and Lys-601.

Belongs to the ERG4/ERG24 family. Interacts with CBX5. Interacts with DNA. Interaction with DNA is sequence independent with higher affinity for supercoiled and relaxed circular DNA than linear DNA. Interacts with lamin B. Interacts with CLNK. Interacts with TMEM147; promoting LBR localization to the nucleus inner membrane. Phosphorylated by CDK1 in mitosis when the inner nuclear membrane breaks down into vesicles that dissociate from the lamina and the chromatin. It is phosphorylated by different protein kinases in interphase when the membrane is associated with these structures. Phosphorylation of LBR and HP1 proteins may be responsible for some of the alterations in chromatin organization and nuclear structure which occur at various times during the cell cycle. Phosphorylated by SRPK1. In late anaphase LBR is dephosphorylated, probably by PP1 and/or PP2A, allowing reassociation with chromatin. As to expression, expressed in the bone marrow, liver, heart, adrenal gland, lung, placenta and uterus. Expressed in osteoclasts and osteoblast-like cells.

Its subcellular location is the nucleus inner membrane. It localises to the endoplasmic reticulum membrane. The protein localises to the cytoplasm. The protein resides in the nucleus. It carries out the reaction 5alpha-cholest-8,14-dien-3beta-ol + NADPH + H(+) = 5alpha-cholest-8-en-3beta-ol + NADP(+). It catalyses the reaction 4,4-dimethyl-5alpha-cholesta-8,24-dien-3beta-ol + NADP(+) = 4,4-dimethyl-5alpha-cholesta-8,14,24-trien-3beta-ol + NADPH + H(+). The catalysed reaction is 4,4-dimethyl-8,14-cholestadien-3beta-ol + NADPH + H(+) = 4,4-dimethyl-5alpha-cholest-8-en-3beta-ol + NADP(+). It functions in the pathway steroid biosynthesis; cholesterol biosynthesis. Functionally, catalyzes the reduction of the C14-unsaturated bond of lanosterol, as part of the metabolic pathway leading to cholesterol biosynthesis. Plays a critical role in myeloid cell cholesterol biosynthesis which is essential to both myeloid cell growth and functional maturation. Mediates the activation of NADPH oxidases, perhaps by maintaining critical levels of cholesterol required for membrane lipid raft formation during neutrophil differentiation. Anchors the lamina and the heterochromatin to the inner nuclear membrane. The protein is Delta(14)-sterol reductase LBR (LBR) of Homo sapiens (Human).